Here is a 449-residue protein sequence, read N- to C-terminus: Exodeoxyribonuclease 7 large subunit (449 aa).

Belongs to the XseA family. In terms of assembly, heterooligomer composed of large and small subunits.

The protein resides in the cytoplasm. The enzyme catalyses Exonucleolytic cleavage in either 5'- to 3'- or 3'- to 5'-direction to yield nucleoside 5'-phosphates.. Functionally, bidirectionally degrades single-stranded DNA into large acid-insoluble oligonucleotides, which are then degraded further into small acid-soluble oligonucleotides. This is Exodeoxyribonuclease 7 large subunit from Latilactobacillus sakei subsp. sakei (strain 23K) (Lactobacillus sakei subsp. sakei).